The primary structure comprises 259 residues: Peroxiredoxin-4 (259 aa).

The Thioredoxin domain maps to 66 to 224 (IRIRKPAPAF…AIRTLKALKF (159 aa)). The Cysteine sulfenic acid (-SOH) intermediate role is filled by cysteine 111.

This sequence belongs to the peroxiredoxin family. AhpC/Prx1 subfamily. In terms of assembly, homodimer; disulfide-linked, upon oxidation. 5 homodimers assemble to form a ring-like decamer.

It localises to the cytoplasm. Its subcellular location is the endoplasmic reticulum. The enzyme catalyses a hydroperoxide + [thioredoxin]-dithiol = an alcohol + [thioredoxin]-disulfide + H2O. In terms of biological role, thiol-specific peroxidase that catalyzes the reduction of hydrogen peroxide and organic hydroperoxides to water and alcohols, respectively. Plays a role in cell protection against oxidative stress by detoxifying peroxides and as sensor of hydrogen peroxide-mediated signaling events. Regulates the activation of NF-kappa-B in the cytosol by a modulation of I-kappa-B-alpha phosphorylation. The chain is Peroxiredoxin-4 (prdx4) from Dictyostelium discoideum (Social amoeba).